The primary structure comprises 267 residues: Ras-related protein Rab-36 (267 aa).

The GTP site is built by V68, G69, K70, T71, S72, D83, Y86, and T89. T71 contributes to the Mg(2+) binding site. Positions 76–94 match the Switch 1 motif; it reads RLCKNVFDHDYKATIGVDF. The Mg(2+) site is built by T89 and D112. Residues 113–132 carry the Switch 2 motif; it reads TAGQEKFKCIASAYYRGAQV. The GTP site is built by G115, K172, D174, S203, A204, and K205. S-geranylgeranyl cysteine attachment occurs at residues C266 and C267.

Belongs to the small GTPase superfamily. Rab family. Mg(2+) serves as cofactor.

It localises to the golgi apparatus membrane. It catalyses the reaction GTP + H2O = GDP + phosphate + H(+). Its activity is regulated as follows. Regulated by guanine nucleotide exchange factors (GEFs) which promote the exchange of bound GDP for free GTP. Regulated by GTPase activating proteins (GAPs) which increase the GTP hydrolysis activity. Inhibited by GDP dissociation inhibitors (GDIs). Functionally, the small GTPases Rab are key regulators of intracellular membrane trafficking, from the formation of transport vesicles to their fusion with membranes. Rabs cycle between an inactive GDP-bound form and an active GTP-bound form that is able to recruit to membranes different sets of downstream effectors directly responsible for vesicle formation, movement, tethering and fusion. In Mus musculus (Mouse), this protein is Ras-related protein Rab-36.